Reading from the N-terminus, the 77-residue chain is Putative defensin-like protein 185 (77 aa).

Residues 1 to 22 form the signal peptide; sequence MKNSSILLLLVVFFVISSSGEA. 4 disulfide bridges follow: C25–C77, C31–C54, C40–C71, and C44–C73.

Belongs to the DEFL family.

The protein localises to the secreted. This Arabidopsis thaliana (Mouse-ear cress) protein is Putative defensin-like protein 185 (LCR39).